Consider the following 276-residue polypeptide: ESX-2 secretion-associated protein EspG2 (276 aa).

Belongs to the EspG family. In terms of assembly, interacts specifically with ESX-2-dependent PE/PPE proteins.

The protein localises to the cytoplasm. Its function is as follows. Specific chaperone for cognate PE/PPE proteins. Plays an important role in preventing aggregation of PE/PPE dimers. The sequence is that of ESX-2 secretion-associated protein EspG2 from Mycobacterium tuberculosis (strain CDC 1551 / Oshkosh).